We begin with the raw amino-acid sequence, 82 residues long: ATP synthase subunit c (82 aa).

Transmembrane regions (helical) follow at residues 7 to 27 (FVAL…CIGI) and 53 to 73 (FLLA…AMMF).

Belongs to the ATPase C chain family. In terms of assembly, F-type ATPases have 2 components, F(1) - the catalytic core - and F(0) - the membrane proton channel. F(1) has five subunits: alpha(3), beta(3), gamma(1), delta(1), epsilon(1). F(0) has three main subunits: a(1), b(2) and c(10-14). The alpha and beta chains form an alternating ring which encloses part of the gamma chain. F(1) is attached to F(0) by a central stalk formed by the gamma and epsilon chains, while a peripheral stalk is formed by the delta and b chains.

It localises to the cell inner membrane. F(1)F(0) ATP synthase produces ATP from ADP in the presence of a proton or sodium gradient. F-type ATPases consist of two structural domains, F(1) containing the extramembraneous catalytic core and F(0) containing the membrane proton channel, linked together by a central stalk and a peripheral stalk. During catalysis, ATP synthesis in the catalytic domain of F(1) is coupled via a rotary mechanism of the central stalk subunits to proton translocation. Its function is as follows. Key component of the F(0) channel; it plays a direct role in translocation across the membrane. A homomeric c-ring of between 10-14 subunits forms the central stalk rotor element with the F(1) delta and epsilon subunits. The sequence is that of ATP synthase subunit c from Polaromonas sp. (strain JS666 / ATCC BAA-500).